The sequence spans 383 residues: Alkanesulfonate monooxygenase (383 aa).

It belongs to the SsuD family. Homotetramer.

The catalysed reaction is an alkanesulfonate + FMNH2 + O2 = an aldehyde + FMN + sulfite + H2O + 2 H(+). In terms of biological role, catalyzes the desulfonation of aliphatic sulfonates. In Erwinia pyrifoliae (strain DSM 12163 / CIP 106111 / Ep16/96), this protein is Alkanesulfonate monooxygenase.